Reading from the N-terminus, the 170-residue chain is Transcriptional repressor NrdR (170 aa).

Residues Cys3–Cys34 fold into a zinc finger. The region spanning Leu46–Asp136 is the ATP-cone domain. Residues Arg148–Val170 form a disordered region.

The protein belongs to the NrdR family. Requires Zn(2+) as cofactor.

Functionally, negatively regulates transcription of bacterial ribonucleotide reductase nrd genes and operons by binding to NrdR-boxes. This is Transcriptional repressor NrdR from Beutenbergia cavernae (strain ATCC BAA-8 / DSM 12333 / CCUG 43141 / JCM 11478 / NBRC 16432 / NCIMB 13614 / HKI 0122).